Reading from the N-terminus, the 196-residue chain is Protein LSM12 homolog A (196 aa).

Residues 3-73 form the Sm domain; the sequence is APGPGEYFSV…VSEVDIINDR (71 aa). The AD domain maps to 81–175; it reads ASLNISKLAN…IVEKHFRDVE (95 aa). A disordered region spans residues 174–196; it reads VESQKTMQRSQAQQTQKDSSLSS. The span at 177–196 shows a compositional bias: polar residues; that stretch reads QKTMQRSQAQQTQKDSSLSS.

Belongs to the LSM12 family.

The polypeptide is Protein LSM12 homolog A (lsm12a) (Danio rerio (Zebrafish)).